Here is a 389-residue protein sequence, read N- to C-terminus: MVYVNAKNYFCDSIINNTDRVLSALIKYHGLSIIAVFLLAIGLFHVALKVVSYVAVLLDVFVLPPTNYLPYGSQRGAWAVVTGASDGIGKEYARQLGLRGFNVFLISRTESKLRELAQEIAEKSKVETKFLAIDVSTDSPQNYKDIETVLETIPSVSILINNVGLSHSIPTPFLETPPAELHNIIAINNLATLKITQLIAPKIVESVKEARATKKFQKGLILTMGSFGGLLPTPLLATYSGSKAFLQHWSNALAVELAPEHVDVELVVSYLVTSAMSKVRKTSALIPNPKQFVTATLSSVGRAGGAQEKFATSTPYWSHALLHWWIAQTVGVFSKLVAGFNYKMHVDIRKRALKKQARQAAGGVADPKNTTAAREGYATESLKNETLKH.

A helical transmembrane segment spans residues 34 to 54; the sequence is IAVFLLAIGLFHVALKVVSYV. Positions 80, 134, 162, 239, 243, 272, and 274 each coordinate NADP(+). Y239 serves as the catalytic Proton donor. K243 acts as the Lowers pKa of active site Tyr in catalysis. The disordered stretch occupies residues 359 to 389; sequence QAAGGVADPKNTTAAREGYATESLKNETLKH.

It belongs to the short-chain dehydrogenases/reductases (SDR) family.

Its subcellular location is the endoplasmic reticulum membrane. The enzyme catalyses a very-long-chain (3R)-3-hydroxyacyl-CoA + NADP(+) = a very-long-chain 3-oxoacyl-CoA + NADPH + H(+). The protein operates within lipid metabolism; fatty acid biosynthesis. Functionally, component of the microsomal membrane bound fatty acid elongation system, which produces the 26-carbon very long-chain fatty acids (VLCFA) from palmitate. Catalyzes the reduction of the 3-ketoacyl-CoA intermediate that is formed in each cycle of fatty acid elongation. VLCFAs serve as precursors for ceramide and sphingolipids. The chain is Very-long-chain 3-oxoacyl-CoA reductase from Yarrowia lipolytica (strain CLIB 122 / E 150) (Yeast).